The sequence spans 307 residues: Ribosomal RNA small subunit methyltransferase H (307 aa).

S-adenosyl-L-methionine contacts are provided by residues 32 to 34 (GGH), D52, F78, D100, and Q107.

It belongs to the methyltransferase superfamily. RsmH family.

It is found in the cytoplasm. The enzyme catalyses cytidine(1402) in 16S rRNA + S-adenosyl-L-methionine = N(4)-methylcytidine(1402) in 16S rRNA + S-adenosyl-L-homocysteine + H(+). Functionally, specifically methylates the N4 position of cytidine in position 1402 (C1402) of 16S rRNA. The sequence is that of Ribosomal RNA small subunit methyltransferase H from Coxiella burnetii (strain CbuK_Q154) (Coxiella burnetii (strain Q154)).